The sequence spans 69 residues: Conotoxin Fr3.1 (69 aa).

The first 20 residues, 1–20 (MLKTGVLLLIFLVLFPLATL), serve as a signal peptide directing secretion. The propeptide occupies 21–51 (QDADQPVERNVENKQDLNLDKRRGMKLLAQR). The residue at position 52 (Gln52) is a Pyrrolidone carboxylic acid. Position 54 is a 4-carboxyglutamate (Glu54). Pro58 bears the 4-hydroxyproline mark.

Belongs to the conotoxin M superfamily. As to expression, expressed by the venom duct.

The protein resides in the secreted. Its function is as follows. Probable toxin. The polypeptide is Conotoxin Fr3.1 (Conus frigidus (Frigid cone)).